Here is a 142-residue protein sequence, read N- to C-terminus: Succinate dehydrogenase subunit 6, mitochondrial (142 aa).

G2 is modified (N-acetylglycine).

As to quaternary structure, component of complex II composed of eight subunits in plants: four classical SDH subunits SDH1, SDH2, SDH3 and SDH4 (a flavoprotein (FP), an iron-sulfur protein (IP), and a cytochrome b composed of a large and a small subunit.), as well as four subunits unknown in mitochondria from bacteria and heterotrophic eukaryotes.

The protein resides in the mitochondrion inner membrane. It participates in carbohydrate metabolism; tricarboxylic acid cycle. The polypeptide is Succinate dehydrogenase subunit 6, mitochondrial (Arabidopsis thaliana (Mouse-ear cress)).